An 83-amino-acid polypeptide reads, in one-letter code: Bublin coiled-coil protein (83 aa).

A disordered region spans residues 1–25; the sequence is MSGPNGDLGTPVEAGAEGEEDGFGE. Residues 25 to 74 are a coiled coil; sequence EAEYAAINSMLDQINSCLDHLEEKNDHLHARLQELLESNRQTRLEFQQQL. Residue Ser82 is modified to Phosphoserine.

Belongs to the UPF0184 (EST00098) family.

The protein localises to the cell junction. It localises to the cytoplasm. The protein resides in the cytoskeleton. Essential for intermediate filament organization in intestinal cells, interacts with intermediate filament and regulates intestinal lumen morphology. The chain is Bublin coiled-coil protein (BBLN) from Bos taurus (Bovine).